The sequence spans 722 residues: Polyribonucleotide nucleotidyltransferase (722 aa).

2 residues coordinate Mg(2+): D487 and D493. One can recognise a KH domain in the interval 554 to 613 (PRIETFKIPTDKIREVIGTGGKVIREIVEKTGAKVNIEDDGTVKVASSDGESIKAAIKWI). Positions 623-691 (GEIYEGTVVK…DRGKTRLSMK (69 aa)) constitute an S1 motif domain. The tract at residues 697–722 (TGEDLEAKQKAEAKAEGEAPAQAAGE) is disordered. Basic and acidic residues predominate over residues 701 to 713 (LEAKQKAEAKAEG).

It belongs to the polyribonucleotide nucleotidyltransferase family. Requires Mg(2+) as cofactor.

It localises to the cytoplasm. The enzyme catalyses RNA(n+1) + phosphate = RNA(n) + a ribonucleoside 5'-diphosphate. Its function is as follows. Involved in mRNA degradation. Catalyzes the phosphorolysis of single-stranded polyribonucleotides processively in the 3'- to 5'-direction. This Rhodopseudomonas palustris (strain TIE-1) protein is Polyribonucleotide nucleotidyltransferase.